The following is a 270-amino-acid chain: Glutamate racemase (270 aa).

Residues 7 to 8 and 39 to 40 contribute to the substrate site; these read DS and YG. Cys-70 serves as the catalytic Proton donor/acceptor. 71–72 lines the substrate pocket; it reads NT. The active-site Proton donor/acceptor is the Cys-194. Substrate is bound at residue 195 to 196; it reads TH.

Belongs to the aspartate/glutamate racemases family.

The catalysed reaction is L-glutamate = D-glutamate. It functions in the pathway cell wall biogenesis; peptidoglycan biosynthesis. Functionally, provides the (R)-glutamate required for cell wall biosynthesis. This chain is Glutamate racemase, found in Cereibacter sphaeroides (strain ATCC 17023 / DSM 158 / JCM 6121 / CCUG 31486 / LMG 2827 / NBRC 12203 / NCIMB 8253 / ATH 2.4.1.) (Rhodobacter sphaeroides).